Here is a 285-residue protein sequence, read N- to C-terminus: PHO85 cyclin-7 (285 aa).

Low complexity predominate over residues 1-14 (MELSSPSKKTTTSP). Residues 1–42 (MELSSPSKKTTTSPINIPGGNRDNLIIGPHSHSFKTDPFSSN) form a disordered region. S69 carries the post-translational modification Phosphoserine.

Belongs to the cyclin family. PHO80 subfamily. Forms a cyclin-CDK complex with PHO85. Interacts with the substrate proteins MMR1 and YJL084C. Interacts with the CDK inhibitor (CKI) PHO81.

The protein resides in the cytoplasm. The PCL7-PHO85 cyclin-CDK is inhibited by PHO81 in low-phosphate conditions. Functionally, cyclin partner of the cyclin-dependent kinase (CDK) PHO85. Together with cyclin PCL6, controls glycogen phosphorylase and glycogen synthase activities in response to nutrient availablility. The PCL7-PHO85 cyclin-CDK holoenzyme has GLC8 kinase activity and phosphorylates and inactivates the phosphatase PP1-2 inhibitor GLC8, causing activation of PP1-2, which then dephosphorylates and activates glycogen phosphorylase. PCL7-PHO85 also phosphorylates MMR1 and YJL084C. This chain is PHO85 cyclin-7 (PCL7), found in Saccharomyces cerevisiae (strain ATCC 204508 / S288c) (Baker's yeast).